Here is a 384-residue protein sequence, read N- to C-terminus: S-adenosylmethionine synthase (384 aa).

An ATP-binding site is contributed by His15. Asp17 is a Mg(2+) binding site. Position 43 (Glu43) interacts with K(+). Residues Glu56 and Gln99 each contribute to the L-methionine site. The tract at residues Gln99–Lys109 is flexible loop. Residues Asp164–Lys166, Arg230–Phe231, Asp239, Arg245–Lys246, Ala262, and Lys266 each bind ATP. Asp239 serves as a coordination point for L-methionine. Lys270 serves as a coordination point for L-methionine.

It belongs to the AdoMet synthase family. As to quaternary structure, homotetramer; dimer of dimers. It depends on Mg(2+) as a cofactor. K(+) is required as a cofactor.

The protein localises to the cytoplasm. It catalyses the reaction L-methionine + ATP + H2O = S-adenosyl-L-methionine + phosphate + diphosphate. The protein operates within amino-acid biosynthesis; S-adenosyl-L-methionine biosynthesis; S-adenosyl-L-methionine from L-methionine: step 1/1. Functionally, catalyzes the formation of S-adenosylmethionine (AdoMet) from methionine and ATP. The overall synthetic reaction is composed of two sequential steps, AdoMet formation and the subsequent tripolyphosphate hydrolysis which occurs prior to release of AdoMet from the enzyme. This Aliivibrio fischeri (strain ATCC 700601 / ES114) (Vibrio fischeri) protein is S-adenosylmethionine synthase.